A 195-amino-acid chain; its full sequence is GRF1-interacting factor 2 (195 aa).

Residues 166-195 are disordered; it reads QQPETGLGGNVGLRGGKQDGADGQGKDDGK. Residues 171-180 are compositionally biased toward gly residues; it reads GLGGNVGLRG. Residues 181 to 195 show a composition bias toward basic and acidic residues; that stretch reads GKQDGADGQGKDDGK.

The protein belongs to the SS18 family. Interacts with GRF1. Predominantly expressed in shoot tips containing the shoot apical meristem (SAM) and flower buds. Also expressed in mature flowers.

Functionally, transcription coactivator that plays a role in the regulation of cell expansion in leaf and cotyledons tissues. Component of a network formed by miR396, the GRFs and their interacting factors (GIFs) acting in the regulation of meristem function, at least partially through the control of cell proliferation. GIFs are involved in the positive regulation of cell proliferation of lateral organs in a functionally redundant manner. This chain is GRF1-interacting factor 2 (GIF2), found in Arabidopsis thaliana (Mouse-ear cress).